A 184-amino-acid polypeptide reads, in one-letter code: uncharacterized protein (184 aa).

Positions 1 to 23 are cleaved as a signal peptide; that stretch reads MFCLLHLCFYLANFASSIKRTHA.

Its subcellular location is the secreted. This is an uncharacterized protein from Homo sapiens (Human).